The following is a 205-amino-acid chain: Protein N-terminal glutamine amidohydrolase (205 aa).

Residues Cys20, His74, and Asp90 contribute to the active site.

This sequence belongs to the NTAQ1 family. In terms of assembly, monomer.

The enzyme catalyses N-terminal L-glutaminyl-[protein] + H2O = N-terminal L-glutamyl-[protein] + NH4(+). Functionally, mediates the side-chain deamidation of N-terminal glutamine residues to glutamate, an important step in N-end rule pathway of protein degradation. Conversion of the resulting N-terminal glutamine to glutamate renders the protein susceptible to arginylation, polyubiquitination and degradation as specified by the N-end rule. Does not act on substrates with internal or C-terminal glutamine and does not act on non-glutamine residues in any position. The polypeptide is Protein N-terminal glutamine amidohydrolase (tun) (Drosophila virilis (Fruit fly)).